We begin with the raw amino-acid sequence, 977 residues long: Aspartate, glycine, lysine and serine-rich protein (977 aa).

The disordered stretch occupies residues 23–116 (GVLPDVDSGF…PITNLGSSTS (94 aa)). Positions 37–50 (EETKSEPKQPDTKP) are enriched in basic and acidic residues. Polar residues predominate over residues 51–63 (EQPSVSKPDSSVN). The N-linked (GlcNAc...) asparagine glycan is linked to asparagine 136. Disordered stretches follow at residues 246–767 (AGGG…TSRG) and 780–922 (GGGK…GSGL). Low complexity predominate over residues 251–278 (YYSDSSDSSDSDSSGSDSSESGSSESGS). The segment covering 309–325 (NGSPDNGTPGSGSSRYT) has biased composition (polar residues). Residues 410–427 (LEDELLGSDSSDEDDIDD) are compositionally biased toward acidic residues. Gly residues predominate over residues 428 to 443 (GLGGLGLGAGPGGPGG). Composition is skewed to basic residues over residues 447–457 (TPKHKPRTDKK) and 465–540 (KRKP…VQRK). The segment covering 541–557 (QPREYKQESPEVEREHS) has biased composition (basic and acidic residues). Low complexity predominate over residues 572-583 (KILITSLTSSRG). Over residues 591 to 643 (DGSGSGNGGGDDGNGGGAGNGGGAGNGGGAGNGGGAGNGGGNGGGGNGGGGND) the composition is skewed to gly residues. The segment covering 660 to 675 (EHRNRCEDDDDYREKC) has biased composition (basic and acidic residues). Residues 700 to 724 (SGSSSSSSATESESSSTSTTPSTSS) are compositionally biased toward low complexity. Composition is skewed to polar residues over residues 730–744 (ILST…TRSG), 758–767 (SRPSVATSRG), and 785–801 (STGT…TSSA). Low complexity-rich tracts occupy residues 803 to 814 (GLDLSGLLGQLG), 822 to 857 (GPKP…GLLG), and 870 to 907 (KKPT…KLSP).

As to expression, component of the acid-insoluble and acid-soluble organic matrix of calcified layers of the shell (at protein level).

The protein resides in the secreted. This chain is Aspartate, glycine, lysine and serine-rich protein, found in Lottia gigantea (Giant owl limpet).